The primary structure comprises 27 residues: uncharacterized protein (27 aa).

It localises to the plastid. The protein resides in the cyanelle. This is an uncharacterized protein from Cyanophora paradoxa.